Here is a 504-residue protein sequence, read N- to C-terminus: Apolipoprotein N-acyltransferase (504 aa).

A run of 6 helical transmembrane segments spans residues 6–26 (LALTGGILLPFAFAPFGYALV), 47–67 (ALYGYLFGLGQFGIGVSWVFV), 83–103 (LTALFVAYLALFPALAGWLGV), 105–125 (AGGGSILVRTLLVFPAAWVVT), 153–173 (IAPVFGVFGVGWLLAVLAGLL), and 186–206 (FALLGAAVVLVGSTQFAKVQW). The 239-residue stretch at 219 to 457 (LQGNVPQDQK…REALTGMMQP (239 aa)) folds into the CN hydrolase domain. The Proton acceptor role is filled by glutamate 258. Residue lysine 317 is part of the active site. The Nucleophile role is filled by cysteine 369. Residues 465-485 (ALWGDWPAIGLCAGIVGICFA) traverse the membrane as a helical segment.

This sequence belongs to the CN hydrolase family. Apolipoprotein N-acyltransferase subfamily.

It is found in the cell inner membrane. The catalysed reaction is N-terminal S-1,2-diacyl-sn-glyceryl-L-cysteinyl-[lipoprotein] + a glycerophospholipid = N-acyl-S-1,2-diacyl-sn-glyceryl-L-cysteinyl-[lipoprotein] + a 2-acyl-sn-glycero-3-phospholipid + H(+). Its pathway is protein modification; lipoprotein biosynthesis (N-acyl transfer). Catalyzes the phospholipid dependent N-acylation of the N-terminal cysteine of apolipoprotein, the last step in lipoprotein maturation. The polypeptide is Apolipoprotein N-acyltransferase (Methylococcus capsulatus (strain ATCC 33009 / NCIMB 11132 / Bath)).